Here is a 503-residue protein sequence, read N- to C-terminus: Glutamate--tRNA ligase (503 aa).

The 'HIGH' region signature appears at 9–19 (PSPTGDPHVGT). Residues 251-255 (KLSKR) carry the 'KMSKS' region motif. Position 254 (lysine 254) interacts with ATP.

It belongs to the class-I aminoacyl-tRNA synthetase family. Glutamate--tRNA ligase type 1 subfamily. As to quaternary structure, monomer.

It localises to the cytoplasm. It carries out the reaction tRNA(Glu) + L-glutamate + ATP = L-glutamyl-tRNA(Glu) + AMP + diphosphate. In terms of biological role, catalyzes the attachment of glutamate to tRNA(Glu) in a two-step reaction: glutamate is first activated by ATP to form Glu-AMP and then transferred to the acceptor end of tRNA(Glu). In Saccharophagus degradans (strain 2-40 / ATCC 43961 / DSM 17024), this protein is Glutamate--tRNA ligase.